Here is a 457-residue protein sequence, read N- to C-terminus: MCGVVGIYHPDGELAPRLAYYSLFSLQHRGQESAGIASFDNHIRQKRGMGLVTEVFNDEDFELLAGKSVIGHVRYSTTGRSRLENAQPFVVKSKAGYIAVAHNGNLVNYSQLRNELENEGRVFTTDSDTEVISQLLSKFLIEEGDIINALERLNESLVGSYTMTMLVDDAVIGYRDPLGFKPLCVGRIDDGYVICSESCAIDALGGEFIRDVQPGKAAIIKDGELEFVKIAKSERRAVCIFEYIYFARPDSIIDGISVYKARSEMGKVLARESPVEADFVSAVPDSGITAAIGYAQESGLPYFEGLIKNRYVGRTFIMPVQSLRETSVRLKVNVVRENVRGRRVVLVDDSIVRGTTSRRIVQMIKDAGAKEVHMRIGSPPIIAPCYFGIDMKSREELIAASHTVEEIGRIFGTDSLAYLSLEGLLEAVRRAGGKRGYCLACLTSKYPVSVPGEECEC.

Catalysis depends on Cys2, which acts as the Nucleophile. The region spanning Cys2 to Gly223 is the Glutamine amidotransferase type-2 domain. A [4Fe-4S] cluster-binding site is contributed by Cys239. Positions 286, 348, and 349 each coordinate Mg(2+). 3 residues coordinate [4Fe-4S] cluster: Cys385, Cys438, and Cys441.

It in the C-terminal section; belongs to the purine/pyrimidine phosphoribosyltransferase family. The cofactor is Mg(2+). Requires [4Fe-4S] cluster as cofactor.

It catalyses the reaction 5-phospho-beta-D-ribosylamine + L-glutamate + diphosphate = 5-phospho-alpha-D-ribose 1-diphosphate + L-glutamine + H2O. The protein operates within purine metabolism; IMP biosynthesis via de novo pathway; N(1)-(5-phospho-D-ribosyl)glycinamide from 5-phospho-alpha-D-ribose 1-diphosphate: step 1/2. Its function is as follows. Catalyzes the formation of phosphoribosylamine from phosphoribosylpyrophosphate (PRPP) and glutamine. The sequence is that of Amidophosphoribosyltransferase from Archaeoglobus fulgidus (strain ATCC 49558 / DSM 4304 / JCM 9628 / NBRC 100126 / VC-16).